The following is a 689-amino-acid chain: MSKHTVLFELGCEELPPKSLKTLRDALQAETVKGLNEAGLDFASVEAYAAPRRLALKIVDVDAAQADTQKRFDGPAVQAAYDAEGKPTKALEGFMRGQGITVDQLSTFQAGKVEKVCYLKDVKGQSLDALLPQILQTALDNLPIAKRMRSAASRTEFVRPVKWVVLLKDDQVIEATIQDHKAGNVTYGHRFHAPEAVTLAHANDYLAALEKAYVVANFEKRQATIQEQVKKLADEVNATAIVPADLLDEVTSLVEWPVALRATFEERYLAVPQEALITTMQDNQKYFCLINAEGKLQPYFITVSNIESKDPTQIIEGNEKVVRPRLSDAEFFFLQDQKQPLASRKEKLANMVFQAQLGTLWDKSTRIAKLAVALSSITGANPADAEKAALLAKCDLTSELVGEFPELQGIAGTYYARIEGENTEVSEALGEQYLPKFAGDVLPKTKTGTTIALADRLDTLVGIFGIGQAPTGSKDPFALRRSAIGILRLIIENELDVTIEELVNLALQGYGDIVKDHDKTRADAVAFLEGRYRAKYEDQGVAVDVLQAVQALAPKSPLDFDKRVNAVNHFRTLPEAAALAAANKRVANILAKEAAPEGSVIEANLVEDAEKALFAELQAVTPVVEPLLAAKDYTAALSKLAALRAPIDAFFDGVMVMADDADLKANRLRLLAQLRNLFTAVADVSVLQG.

The protein belongs to the class-II aminoacyl-tRNA synthetase family. As to quaternary structure, tetramer of two alpha and two beta subunits.

The protein resides in the cytoplasm. It carries out the reaction tRNA(Gly) + glycine + ATP = glycyl-tRNA(Gly) + AMP + diphosphate. The sequence is that of Glycine--tRNA ligase beta subunit from Acinetobacter baumannii (strain ACICU).